We begin with the raw amino-acid sequence, 287 residues long: Thioredoxin-related transmembrane protein 2 (287 aa).

Residues 1 to 35 (MAVLAPLLAFLYAVPGLLRWVSQPYYLLSALLSVS) form the signal peptide. Over 36-112 (FLLVRKVPPV…ILFFRLDLRM (77 aa)) the chain is Extracellular. The chain crosses the membrane as a helical span at residues 113–133 (GLLYITLCIVFLMTCKPPLYL). At 134–287 (GPEHIKYFSD…NEYNDSKKDQ (154 aa)) the chain is on the cytoplasmic side. One can recognise a Thioredoxin domain in the interval 135-269 (PEHIKYFSDK…LYQKAKKIRK (135 aa)). Residues 284–287 (KKDQ) carry the Di-lysine motif motif.

In terms of assembly, monomer. Homodimer; disulfide-linked. Occurs in both reduced and oxidized monomeric form. Oxidative conditions increase homodimerization.

Its subcellular location is the endoplasmic reticulum membrane. The protein resides in the mitochondrion membrane. Endoplasmic reticulum and mitochondria-associated protein that probably functions as a regulator of cellular redox state and thereby regulates protein post-translational modification, protein folding and mitochondrial activity. The protein is Thioredoxin-related transmembrane protein 2 (tmx2) of Xenopus tropicalis (Western clawed frog).